A 271-amino-acid polypeptide reads, in one-letter code: Urease accessory protein UreD (271 aa).

This sequence belongs to the UreD family. As to quaternary structure, ureD, UreF and UreG form a complex that acts as a GTP-hydrolysis-dependent molecular chaperone, activating the urease apoprotein by helping to assemble the nickel containing metallocenter of UreC. The UreE protein probably delivers the nickel.

The protein localises to the cytoplasm. Its function is as follows. Required for maturation of urease via the functional incorporation of the urease nickel metallocenter. The sequence is that of Urease accessory protein UreD from Actinomyces naeslundii.